A 318-amino-acid chain; its full sequence is uncharacterized protein (318 aa).

The protein belongs to the NAD(P)-dependent epimerase/dehydratase family.

This is an uncharacterized protein from Staphylococcus epidermidis (strain ATCC 12228 / FDA PCI 1200).